We begin with the raw amino-acid sequence, 463 residues long: ATP-dependent protease ATPase subunit HslU (463 aa).

Residues Val-21, 63–68 (GVGKTE), Asp-276, Glu-341, and Arg-413 each bind ATP.

This sequence belongs to the ClpX chaperone family. HslU subfamily. As to quaternary structure, a double ring-shaped homohexamer of HslV is capped on each side by a ring-shaped HslU homohexamer. The assembly of the HslU/HslV complex is dependent on binding of ATP.

It localises to the cytoplasm. Functionally, ATPase subunit of a proteasome-like degradation complex; this subunit has chaperone activity. The binding of ATP and its subsequent hydrolysis by HslU are essential for unfolding of protein substrates subsequently hydrolyzed by HslV. HslU recognizes the N-terminal part of its protein substrates and unfolds these before they are guided to HslV for hydrolysis. In Thermotoga sp. (strain RQ2), this protein is ATP-dependent protease ATPase subunit HslU.